Here is a 113-residue protein sequence, read N- to C-terminus: Cell cycle protein GpsB (113 aa).

Positions 32 to 71 form a coiled coil; the sequence is LDNVIKDYESFTKDNQQLSDENERLRAKVDELTKQVAVGA.

Belongs to the GpsB family. In terms of assembly, forms polymers through the coiled coil domains. Interacts with PBP1, MreC and EzrA.

Its subcellular location is the cytoplasm. Divisome component that associates with the complex late in its assembly, after the Z-ring is formed, and is dependent on DivIC and PBP2B for its recruitment to the divisome. Together with EzrA, is a key component of the system that regulates PBP1 localization during cell cycle progression. Its main role could be the removal of PBP1 from the cell pole after pole maturation is completed. Also contributes to the recruitment of PBP1 to the division complex. Not essential for septum formation. The polypeptide is Cell cycle protein GpsB (Lactiplantibacillus plantarum (strain ATCC BAA-793 / NCIMB 8826 / WCFS1) (Lactobacillus plantarum)).